The sequence spans 432 residues: Adenylosuccinate synthetase (432 aa).

GTP contacts are provided by residues 13-19 (GDEGKGK) and 41-43 (GHT). Residue Asp14 is the Proton acceptor of the active site. Asp14 and Gly41 together coordinate Mg(2+). IMP is bound by residues 14-17 (DEGK), 39-42 (NAGH), Thr130, Arg144, Gln225, Thr240, and Arg304. His42 functions as the Proton donor in the catalytic mechanism. 300-306 (AVTGRPR) contacts substrate. Residues Arg306, 332–334 (KLD), and 415–417 (STG) each bind GTP.

The protein belongs to the adenylosuccinate synthetase family. Homodimer. The cofactor is Mg(2+).

It localises to the cytoplasm. The enzyme catalyses IMP + L-aspartate + GTP = N(6)-(1,2-dicarboxyethyl)-AMP + GDP + phosphate + 2 H(+). Its pathway is purine metabolism; AMP biosynthesis via de novo pathway; AMP from IMP: step 1/2. Functionally, plays an important role in the de novo pathway of purine nucleotide biosynthesis. Catalyzes the first committed step in the biosynthesis of AMP from IMP. In Histophilus somni (strain 2336) (Haemophilus somnus), this protein is Adenylosuccinate synthetase.